The following is a 516-amino-acid chain: Radial spoke head protein 3 homolog A (516 aa).

Disordered stretches follow at residues 1 to 45, 120 to 139, and 190 to 233; these read MAAT…GNPA, STLN…AEAS, and PTGQ…PVEG. The segment covering 12-25 has biased composition (basic residues); that stretch reads AKKRPLHQRARRPA. Over residues 120–129 the composition is skewed to polar residues; sequence STLNQASAMT. The segment covering 208-217 has biased composition (basic residues); that stretch reads QARRRALARK. Basic and acidic residues predominate over residues 218–233; the sequence is RAQEQLKPRTPEPVEG. Thr-270 bears the Phosphothreonine; by MAPK1 mark. Residues 333–369 adopt a coiled-coil conformation; it reads YEEIRNVELAEVQRLEEQERRHREEKERRKKQQWEIV. The segment at 459 to 516 is disordered; that stretch reads EAMPPGQKTNVINGPNTVTDPSVTTLHTQKPVLDRVSSQPAPSQERKPVEEGGHLMAE. A compositionally biased stretch (polar residues) spans 465–486; the sequence is QKTNVINGPNTVTDPSVTTLHT. Positions 502–516 are enriched in basic and acidic residues; the sequence is QERKPVEEGGHLMAE.

The protein belongs to the flagellar radial spoke RSP3 family. May be a component of axonemal radial spokes. Interacts with IQUB. Interacts with phosphorylated MAPK1. Interacts with MEK1. Interacts with PKA regulatory subunits PRKAR1A and PRKAR1B. Interacts with RSPH1. Interacts with RSPH4A. Interacts with RSPH6A. Interacts with RSPH9. Interacts with CFAP61. Interacts with LRRC23.

Its subcellular location is the cytoplasm. The protein localises to the cytoskeleton. It localises to the cilium axoneme. It is found in the flagellum axoneme. Its function is as follows. May function as part of axonemal radial spoke complexes that play an important part in the motility of sperm and cilia. Functions as a protein kinase A-anchoring protein that scaffolds the cAMP-dependent protein kinase holoenzyme. May serve as a point of convergence for MAPK and PKA signaling in cilia. The chain is Radial spoke head protein 3 homolog A (Rsph3a) from Mus musculus (Mouse).